The chain runs to 51 residues: Conotoxin Cal6.33 (51 aa).

A signal peptide spans 1 to 22 (MKLTCVVIIAVLILTACQFTTA). 3 disulfides stabilise this stretch: Cys25-Cys39, Cys32-Cys43, and Cys38-Cys50.

Belongs to the conotoxin O1 superfamily. As to expression, expressed by the venom duct.

The protein localises to the secreted. Its function is as follows. Probable neurotoxin. The chain is Conotoxin Cal6.33 from Californiconus californicus (California cone).